A 390-amino-acid chain; its full sequence is Chorismate synthase (390 aa).

Arg-39 and Arg-45 together coordinate NADP(+). Residues 132–134 (RSS), 253–254 (NA), Gly-298, 313–317 (KPIPT), and Arg-339 each bind FMN.

It belongs to the chorismate synthase family. Homotetramer. FMNH2 serves as cofactor.

The catalysed reaction is 5-O-(1-carboxyvinyl)-3-phosphoshikimate = chorismate + phosphate. The protein operates within metabolic intermediate biosynthesis; chorismate biosynthesis; chorismate from D-erythrose 4-phosphate and phosphoenolpyruvate: step 7/7. Its function is as follows. Catalyzes the anti-1,4-elimination of the C-3 phosphate and the C-6 proR hydrogen from 5-enolpyruvylshikimate-3-phosphate (EPSP) to yield chorismate, which is the branch point compound that serves as the starting substrate for the three terminal pathways of aromatic amino acid biosynthesis. This reaction introduces a second double bond into the aromatic ring system. This chain is Chorismate synthase, found in Bacillus cytotoxicus (strain DSM 22905 / CIP 110041 / 391-98 / NVH 391-98).